Here is a 1351-residue protein sequence, read N- to C-terminus: DNA-directed RNA polymerase subunit beta' (1351 aa).

Zn(2+) contacts are provided by C70, C72, C85, and C88. 3 residues coordinate Mg(2+): D460, D462, and D464. Residues C801, C875, C882, and C885 each contribute to the Zn(2+) site.

It belongs to the RNA polymerase beta' chain family. The RNAP catalytic core consists of 2 alpha, 1 beta, 1 beta' and 1 omega subunit. When a sigma factor is associated with the core the holoenzyme is formed, which can initiate transcription. Mg(2+) serves as cofactor. It depends on Zn(2+) as a cofactor.

It carries out the reaction RNA(n) + a ribonucleoside 5'-triphosphate = RNA(n+1) + diphosphate. In terms of biological role, DNA-dependent RNA polymerase catalyzes the transcription of DNA into RNA using the four ribonucleoside triphosphates as substrates. This is DNA-directed RNA polymerase subunit beta' from Syntrophobacter fumaroxidans (strain DSM 10017 / MPOB).